Consider the following 124-residue polypeptide: Holo-[acyl-carrier-protein] synthase (124 aa).

Mg(2+)-binding residues include D8 and E56.

The protein belongs to the P-Pant transferase superfamily. AcpS family. Requires Mg(2+) as cofactor.

It localises to the cytoplasm. The enzyme catalyses apo-[ACP] + CoA = holo-[ACP] + adenosine 3',5'-bisphosphate + H(+). In terms of biological role, transfers the 4'-phosphopantetheine moiety from coenzyme A to a Ser of acyl-carrier-protein. The chain is Holo-[acyl-carrier-protein] synthase from Nitratidesulfovibrio vulgaris (strain ATCC 29579 / DSM 644 / CCUG 34227 / NCIMB 8303 / VKM B-1760 / Hildenborough) (Desulfovibrio vulgaris).